A 38-amino-acid chain; its full sequence is Kunitz-type trypsin inhibitor beta chain (38 aa).

Belongs to the protease inhibitor I3 (leguminous Kunitz-type inhibitor) family. Heterodimer of an alpha and a beta chain linked by a disulfide bond.

Functionally, inhibition of trypsin. This Neltuma juliflora (Mesquite) protein is Kunitz-type trypsin inhibitor beta chain.